The primary structure comprises 354 residues: Phosphate acyltransferase (354 aa).

Belongs to the PlsX family. As to quaternary structure, homodimer. Probably interacts with PlsY.

The protein resides in the cytoplasm. The enzyme catalyses a fatty acyl-[ACP] + phosphate = an acyl phosphate + holo-[ACP]. It participates in lipid metabolism; phospholipid metabolism. Its function is as follows. Catalyzes the reversible formation of acyl-phosphate (acyl-PO(4)) from acyl-[acyl-carrier-protein] (acyl-ACP). This enzyme utilizes acyl-ACP as fatty acyl donor, but not acyl-CoA. This is Phosphate acyltransferase from Ralstonia nicotianae (strain ATCC BAA-1114 / GMI1000) (Ralstonia solanacearum).